Consider the following 118-residue polypeptide: Large ribosomal subunit protein bL17 (118 aa).

This sequence belongs to the bacterial ribosomal protein bL17 family. As to quaternary structure, part of the 50S ribosomal subunit. Contacts protein L32.

In Phytoplasma mali (strain AT), this protein is Large ribosomal subunit protein bL17.